Here is a 230-residue protein sequence, read N- to C-terminus: Large ribosomal subunit protein uL1 (230 aa).

This sequence belongs to the universal ribosomal protein uL1 family. In terms of assembly, part of the 50S ribosomal subunit.

Its function is as follows. Binds directly to 23S rRNA. The L1 stalk is quite mobile in the ribosome, and is involved in E site tRNA release. Protein L1 is also a translational repressor protein, it controls the translation of the L11 operon by binding to its mRNA. The chain is Large ribosomal subunit protein uL1 from Bacillus cereus (strain B4264).